An 859-amino-acid polypeptide reads, in one-letter code: Valine--tRNA ligase (859 aa).

The short motif at 46–56 (PTVSGQLHIGH) is the 'HIGH' region element. Residues 583-587 (KMSKS) carry the 'KMSKS' region motif. Lysine 586 is a binding site for ATP.

Belongs to the class-I aminoacyl-tRNA synthetase family. ValS type 2 subfamily. As to quaternary structure, monomer.

It is found in the cytoplasm. It catalyses the reaction tRNA(Val) + L-valine + ATP = L-valyl-tRNA(Val) + AMP + diphosphate. Functionally, catalyzes the attachment of valine to tRNA(Val). As ValRS can inadvertently accommodate and process structurally similar amino acids such as threonine, to avoid such errors, it has a 'posttransfer' editing activity that hydrolyzes mischarged Thr-tRNA(Val) in a tRNA-dependent manner. The chain is Valine--tRNA ligase from Rickettsia felis (strain ATCC VR-1525 / URRWXCal2) (Rickettsia azadi).